Reading from the N-terminus, the 419-residue chain is S-adenosylmethionine synthase (419 aa).

His15 contacts ATP. A Mg(2+)-binding site is contributed by Asp17. Glu43 contacts K(+). L-methionine is bound by residues Glu56 and Gln100. Residues 100–110 (QSPDIAQGVNE) form a flexible loop region. ATP-binding positions include 171–173 (DGK), 248–249 (KF), Asp257, 263–264 (RK), Ala280, and Lys284. Residue Asp257 participates in L-methionine binding. Residue Lys288 coordinates L-methionine.

This sequence belongs to the AdoMet synthase family. As to quaternary structure, homotetramer; dimer of dimers. It depends on Mg(2+) as a cofactor. K(+) is required as a cofactor.

It localises to the cytoplasm. The catalysed reaction is L-methionine + ATP + H2O = S-adenosyl-L-methionine + phosphate + diphosphate. The protein operates within amino-acid biosynthesis; S-adenosyl-L-methionine biosynthesis; S-adenosyl-L-methionine from L-methionine: step 1/1. Functionally, catalyzes the formation of S-adenosylmethionine (AdoMet) from methionine and ATP. The overall synthetic reaction is composed of two sequential steps, AdoMet formation and the subsequent tripolyphosphate hydrolysis which occurs prior to release of AdoMet from the enzyme. In Prochlorococcus marinus (strain MIT 9303), this protein is S-adenosylmethionine synthase.